The following is a 419-amino-acid chain: MQVLILGSGVVGVTSAYYLATQGHEVTVVDRREAPAMETSYGNAGQVSFGFSSPWAAPGIPRKALKWMFQEHAPLKIQPKRDPAMARFMMAMFNNCTPERYAVNKERMVRVAEYSRQCIDALRRDTGIRYEDRQRGLLQLFRHESQVEAAGKDMRVLSECGVRHRLLGAEELVTAEPALARVPGKFVGGLHLPDDQTGDCHLFTQRLAEHCREHLGVTFRFGVDVQRIERQAGRVERVVTSAGSLRADAYVVCLGSFSPLLVKDLDIRLPIYPVKGYSLTLPVTDDGGAPQSTVMDETFKVAISRFDDRIRVGGTAELASYDLSLLEKRRATISMVVRDVFPEGGDAAKAEFWTGLRPMTPDSTPIIGATRYDNLWLNTGHGTLGWTMSCGSAHLLADLMAGRRPAIDPIGLDVSRYAA.

An FAD-binding site is contributed by 3–17; sequence VLILGSGVVGVTSAY.

This sequence belongs to the DadA oxidoreductase family. FAD is required as a cofactor.

It catalyses the reaction a D-alpha-amino acid + A + H2O = a 2-oxocarboxylate + AH2 + NH4(+). Its pathway is amino-acid degradation; D-alanine degradation; NH(3) and pyruvate from D-alanine: step 1/1. Oxidative deamination of D-amino acids. This is D-amino acid dehydrogenase from Chromohalobacter salexigens (strain ATCC BAA-138 / DSM 3043 / CIP 106854 / NCIMB 13768 / 1H11).